The primary structure comprises 403 residues: Acetyl-CoA acetyltransferase IA (403 aa).

The active-site Acyl-thioester intermediate is the C91. Active-site proton acceptor residues include H353 and C383. Positions 401 to 403 (AKL) match the Microbody targeting signal motif.

Belongs to the thiolase-like superfamily. Thiolase family. In terms of assembly, multimeric.

It is found in the peroxisome. It catalyses the reaction 2 acetyl-CoA = acetoacetyl-CoA + CoA. The protein operates within metabolic intermediate biosynthesis; (R)-mevalonate biosynthesis; (R)-mevalonate from acetyl-CoA: step 1/3. This chain is Acetyl-CoA acetyltransferase IA (PACTA), found in Candida tropicalis (Yeast).